Here is a 561-residue protein sequence, read N- to C-terminus: Membrane protein insertase YidC (561 aa).

Transmembrane regions (helical) follow at residues 7 to 27, 342 to 362, 368 to 388, 438 to 458, 469 to 489, and 516 to 536; these read ILIVALAIVSYVMVLKWNQDY, LELTVDYGFLWFIAQPIFWLL, LLGNWGWSIIVLTMLIKGLFF, LGGCLPILVQMPVFLALYWVL, WMLWITDLSIKDPFFILPIIM, and PIIFTFFFLWFPAGLVLYWVV.

Belongs to the OXA1/ALB3/YidC family. Type 1 subfamily. Interacts with the Sec translocase complex via SecD. Specifically interacts with transmembrane segments of nascent integral membrane proteins during membrane integration.

It is found in the cell inner membrane. Required for the insertion and/or proper folding and/or complex formation of integral membrane proteins into the membrane. Involved in integration of membrane proteins that insert both dependently and independently of the Sec translocase complex, as well as at least some lipoproteins. Aids folding of multispanning membrane proteins. This Pseudomonas entomophila (strain L48) protein is Membrane protein insertase YidC.